Consider the following 310-residue polypeptide: tRNA dimethylallyltransferase (310 aa).

24–31 is an ATP binding site; the sequence is GPTASGKT. 26 to 31 lines the substrate pocket; sequence TASGKT. Positions 49 to 52 are interaction with substrate tRNA; that stretch reads DSRQ.

It belongs to the IPP transferase family. Monomer. Mg(2+) serves as cofactor.

It catalyses the reaction adenosine(37) in tRNA + dimethylallyl diphosphate = N(6)-dimethylallyladenosine(37) in tRNA + diphosphate. Its function is as follows. Catalyzes the transfer of a dimethylallyl group onto the adenine at position 37 in tRNAs that read codons beginning with uridine, leading to the formation of N6-(dimethylallyl)adenosine (i(6)A). The polypeptide is tRNA dimethylallyltransferase (Synechococcus sp. (strain WH7803)).